Consider the following 346-residue polypeptide: D-erythrose-4-phosphate dehydrogenase (346 aa).

11 to 12 (RI) provides a ligand contact to NAD(+). Residues 163-165 (SCT), arginine 209, 222-223 (TK), and arginine 245 contribute to the substrate site. Cysteine 164 acts as the Nucleophile in catalysis. Asparagine 327 provides a ligand contact to NAD(+).

Belongs to the glyceraldehyde-3-phosphate dehydrogenase family. Epd subfamily. In terms of assembly, homotetramer.

The protein resides in the cytoplasm. The enzyme catalyses D-erythrose 4-phosphate + NAD(+) + H2O = 4-phospho-D-erythronate + NADH + 2 H(+). It functions in the pathway cofactor biosynthesis; pyridoxine 5'-phosphate biosynthesis; pyridoxine 5'-phosphate from D-erythrose 4-phosphate: step 1/5. Catalyzes the NAD-dependent conversion of D-erythrose 4-phosphate to 4-phosphoerythronate. The polypeptide is D-erythrose-4-phosphate dehydrogenase (Vibrio vulnificus (strain CMCP6)).